Consider the following 282-residue polypeptide: Protein DOG1-like 3 (282 aa).

Positions 11–254 (EQLQKGCYYE…HEWGRVREEQ (244 aa)) constitute a DOG1 domain.

This Arabidopsis thaliana (Mouse-ear cress) protein is Protein DOG1-like 3.